The primary structure comprises 202 residues: Oocyte-secreted protein 1 (202 aa).

The signal sequence occupies residues 1 to 21; sequence MKPFVGLLGLLLLLSFMKTCA. Residues 157-183 form a disordered region; the sequence is QPNLSTSSEDHHVSTEPWASETSRSEA.

Belongs to the PLAC1 family. As to expression, expressed in oocytes in primary through antral-stage follicles. Expressed in liver and ovary.

The protein resides in the secreted. Functionally, may be involved in cell differentiation. The polypeptide is Oocyte-secreted protein 1 (Oosp1) (Mus musculus (Mouse)).